A 413-amino-acid polypeptide reads, in one-letter code: Cell wall mannoprotein HSP150 (413 aa).

The signal sequence occupies residues 1 to 18 (MQYKKTLVASALAATTLA). The propeptide occupies 19–72 (AYAPSEPWSTLTPTATYSGGVTDYASTFGIAVQPISTTSSASSAATTASSKAKR). PIR1/2/3 repeat units follow at residues 73–89 (AASQ…TTTA), 97–115 (AAAV…TKTT), 116–134 (AAAV…TKTT), 140–158 (AAAV…TTTL), 164–182 (AAAV…TTTL), 188–206 (AAAV…TKTT), 207–225 (AAAV…TKTT), 226–244 (AAAV…TKTT), 245–263 (AAAV…TKTT), 264–282 (AAAV…TKTT), and 283–300 (QAAS…TATS).

Belongs to the PIR protein family. Post-translationally, covalently linked to beta-1,3-glucan of the inner cell wall layer via an alkali-sensitive ester linkage between the gamma-carboxyl group of glutamic acids, arising from specific glutamines within the PIR1/2/3 repeats, and hydroxyl groups of glucoses of beta-1,3-glucan chains. The propeptide is cleaved off in the late Golgi. While both peptides are secreted, only a fraction of the mature glycoprotein is incorporated into the cell wall. In terms of processing, O-glycosylated. Extensively O-mannosylated.

The protein resides in the secreted. It localises to the cell wall. In terms of biological role, component of the outer cell wall layer. Required for stability of the cell wall and for optimal growth. Required for resistance against several antifungal and cell wall-perturbing agents and for tolerance to heat shock. This chain is Cell wall mannoprotein HSP150 (HSP150), found in Saccharomyces cerevisiae (strain ATCC 204508 / S288c) (Baker's yeast).